We begin with the raw amino-acid sequence, 184 residues long: ATP synthase subunit b, chloroplastic (184 aa).

Residues 31–53 (LINLGIVISLLIYFGKGVLSNLL) traverse the membrane as a helical segment.

Belongs to the ATPase B chain family. F-type ATPases have 2 components, F(1) - the catalytic core - and F(0) - the membrane proton channel. F(1) has five subunits: alpha(3), beta(3), gamma(1), delta(1), epsilon(1). F(0) has four main subunits: a(1), b(1), b'(1) and c(10-14). The alpha and beta chains form an alternating ring which encloses part of the gamma chain. F(1) is attached to F(0) by a central stalk formed by the gamma and epsilon chains, while a peripheral stalk is formed by the delta, b and b' chains.

It localises to the plastid. The protein resides in the chloroplast thylakoid membrane. In terms of biological role, f(1)F(0) ATP synthase produces ATP from ADP in the presence of a proton or sodium gradient. F-type ATPases consist of two structural domains, F(1) containing the extramembraneous catalytic core and F(0) containing the membrane proton channel, linked together by a central stalk and a peripheral stalk. During catalysis, ATP synthesis in the catalytic domain of F(1) is coupled via a rotary mechanism of the central stalk subunits to proton translocation. Its function is as follows. Component of the F(0) channel, it forms part of the peripheral stalk, linking F(1) to F(0). The sequence is that of ATP synthase subunit b, chloroplastic from Aneura mirabilis (Parasitic liverwort).